We begin with the raw amino-acid sequence, 299 residues long: Acetylglutamate kinase (299 aa).

Substrate-binding positions include 64–65 (GG), Arg-86, and Asn-197.

The protein belongs to the acetylglutamate kinase family. ArgB subfamily.

The protein localises to the cytoplasm. The catalysed reaction is N-acetyl-L-glutamate + ATP = N-acetyl-L-glutamyl 5-phosphate + ADP. It participates in amino-acid biosynthesis; L-arginine biosynthesis; N(2)-acetyl-L-ornithine from L-glutamate: step 2/4. Functionally, catalyzes the ATP-dependent phosphorylation of N-acetyl-L-glutamate. The sequence is that of Acetylglutamate kinase from Persephonella marina (strain DSM 14350 / EX-H1).